Reading from the N-terminus, the 1062-residue chain is Carbamoyl phosphate synthase large chain (1062 aa).

The carboxyphosphate synthetic domain stretch occupies residues 1–401 (MPKRTDIHKI…AMQKAVQSLE (401 aa)). The ATP site is built by Arg-129, Arg-169, Gly-175, Gly-176, Lys-208, Ile-210, Glu-215, Gly-241, Ile-242, His-243, Gln-284, and Glu-298. The ATP-grasp 1 domain occupies 133–327 (KELCQKLGEP…IAKMAAKIAI (195 aa)). 3 residues coordinate Mg(2+): Gln-284, Glu-298, and Asn-300. Mn(2+) contacts are provided by Gln-284, Glu-298, and Asn-300. Residues 402–546 (IDEKDLYSAK…YSTYDGENES (145 aa)) form an oligomerization domain region. The tract at residues 547–929 (RKSGKKSVIV…ALYKAFAGAK (383 aa)) is carbamoyl phosphate synthetic domain. An ATP-grasp 2 domain is found at 671-861 (DQIIKSLHLH…MAQVATRVIM (191 aa)). Positions 707, 746, 748, 752, 777, 778, 779, 780, 820, and 832 each coordinate ATP. Positions 820, 832, and 834 each coordinate Mg(2+). The Mn(2+) site is built by Gln-820, Glu-832, and Asn-834. One can recognise an MGS-like domain in the interval 930–1062 (MQLPENGNVL…NRSFATDALK (133 aa)). The tract at residues 930-1062 (MQLPENGNVL…NRSFATDALK (133 aa)) is allosteric domain.

The protein belongs to the CarB family. In terms of assembly, composed of two chains; the small (or glutamine) chain promotes the hydrolysis of glutamine to ammonia, which is used by the large (or ammonia) chain to synthesize carbamoyl phosphate. Tetramer of heterodimers (alpha,beta)4. Mg(2+) serves as cofactor. It depends on Mn(2+) as a cofactor.

The enzyme catalyses hydrogencarbonate + L-glutamine + 2 ATP + H2O = carbamoyl phosphate + L-glutamate + 2 ADP + phosphate + 2 H(+). The catalysed reaction is hydrogencarbonate + NH4(+) + 2 ATP = carbamoyl phosphate + 2 ADP + phosphate + 2 H(+). The protein operates within amino-acid biosynthesis; L-arginine biosynthesis; carbamoyl phosphate from bicarbonate: step 1/1. It participates in pyrimidine metabolism; UMP biosynthesis via de novo pathway; (S)-dihydroorotate from bicarbonate: step 1/3. In terms of biological role, large subunit of the glutamine-dependent carbamoyl phosphate synthetase (CPSase). CPSase catalyzes the formation of carbamoyl phosphate from the ammonia moiety of glutamine, carbonate, and phosphate donated by ATP, constituting the first step of 2 biosynthetic pathways, one leading to arginine and/or urea and the other to pyrimidine nucleotides. The large subunit (synthetase) binds the substrates ammonia (free or transferred from glutamine from the small subunit), hydrogencarbonate and ATP and carries out an ATP-coupled ligase reaction, activating hydrogencarbonate by forming carboxy phosphate which reacts with ammonia to form carbamoyl phosphate. The protein is Carbamoyl phosphate synthase large chain of Lactobacillus helveticus (strain DPC 4571).